Consider the following 570-residue polypeptide: uncharacterized protein (570 aa).

Low complexity predominate over residues 1–15 (MTESIISSRTASISS). The segment at 1 to 34 (MTESIISSRTASISSKEGYEIRQGSTDSSSLDLE) is disordered. Serine 14 is subject to Phosphoserine. 12 helical membrane-spanning segments follow: residues 96 to 116 (WKLYIYLLLMLGFLDMMLFIG), 141 to 161 (NLNTLFYVGYIVGQFPGHYIM), 163 to 183 (TFPLGKFVGLVTFSWSVIVFL), 198 to 218 (FFLGFTESCLLPAMEATMGMF), 229 to 249 (PVFWISCLSCGIPAGFIAYGL), 261 to 281 (LFMIITGGITFFLSIFLFFYY), 328 to 348 (PITWLFTFAAFTLMLSNNLAY), 369 to 389 (VALAGYNTVSAIIATFAMYLI), 397 to 417 (AMFWMLPSITGGIAFVALPWS), 423 to 443 (LATMIIASDFGITYIIALGWT), 457 to 477 (GLMFMVGYAIANIISPQLWQS), and 485 to 505 (PAWIVQIVVAWFVTPIIYLVA).

The protein belongs to the major facilitator superfamily. Allantoate permease family.

It is found in the endoplasmic reticulum. The protein resides in the membrane. This is an uncharacterized protein from Schizosaccharomyces pombe (strain 972 / ATCC 24843) (Fission yeast).